Consider the following 2273-residue polypeptide: Acetyl-CoA carboxylase, mitochondrial (2273 aa).

The N-terminal 104 residues, Lys1–Leu104, are a transit peptide targeting the mitochondrion. Residues Val134–Leu635 form the Biotin carboxylation domain. The ATP-grasp domain occupies Lys292 to Met484. Gly332 to Gly337 lines the ATP pocket. Residue Arg459 is part of the active site. The Biotinyl-binding domain occupies Leu763–Thr837. Lys804 bears the N6-biotinyllysine mark. Positions Pro1532 to Glu1867 constitute a CoA carboxyltransferase N-terminal domain. The tract at residues Pro1532 to Lys2187 is carboxyltransferase. The CoA site is built by Arg1776, Lys2080, and Arg2082. The region spanning Arg1871–Lys2187 is the CoA carboxyltransferase C-terminal domain.

The cofactor is biotin.

The protein resides in the mitochondrion. The enzyme catalyses hydrogencarbonate + acetyl-CoA + ATP = malonyl-CoA + ADP + phosphate + H(+). It catalyses the reaction N(6)-biotinyl-L-lysyl-[protein] + hydrogencarbonate + ATP = N(6)-carboxybiotinyl-L-lysyl-[protein] + ADP + phosphate + H(+). It participates in lipid metabolism; malonyl-CoA biosynthesis; malonyl-CoA from acetyl-CoA: step 1/1. Functionally, catalyzes the rate-limiting reaction in the mitochondrial fatty acid synthesis (FAS) type II pathway. Responsible for the production of the mitochondrial malonyl-CoA, used for the biosynthesis of the cofactor lipoic acid. This protein carries three functions: biotin carboxyl carrier protein, biotin carboxylase, and carboxyltransferase. The chain is Acetyl-CoA carboxylase, mitochondrial (HFA1) from Saccharomyces cerevisiae (strain YJM789) (Baker's yeast).